Reading from the N-terminus, the 354-residue chain is Uroporphyrinogen decarboxylase (354 aa).

Substrate is bound by residues 27-31 (RQAGR), Asp-77, Tyr-154, Thr-209, and His-327.

Belongs to the uroporphyrinogen decarboxylase family. Homodimer.

The protein resides in the cytoplasm. The catalysed reaction is uroporphyrinogen III + 4 H(+) = coproporphyrinogen III + 4 CO2. The protein operates within porphyrin-containing compound metabolism; protoporphyrin-IX biosynthesis; coproporphyrinogen-III from 5-aminolevulinate: step 4/4. Functionally, catalyzes the decarboxylation of four acetate groups of uroporphyrinogen-III to yield coproporphyrinogen-III. The sequence is that of Uroporphyrinogen decarboxylase from Salmonella arizonae (strain ATCC BAA-731 / CDC346-86 / RSK2980).